A 256-amino-acid chain; its full sequence is Thiazole synthase (256 aa).

Lys-95 acts as the Schiff-base intermediate with DXP in catalysis. Residues Gly-156, 182–183 (AG), and 204–205 (NT) each bind 1-deoxy-D-xylulose 5-phosphate.

Belongs to the ThiG family. As to quaternary structure, homotetramer. Forms heterodimers with either ThiH or ThiS.

It localises to the cytoplasm. The catalysed reaction is [ThiS sulfur-carrier protein]-C-terminal-Gly-aminoethanethioate + 2-iminoacetate + 1-deoxy-D-xylulose 5-phosphate = [ThiS sulfur-carrier protein]-C-terminal Gly-Gly + 2-[(2R,5Z)-2-carboxy-4-methylthiazol-5(2H)-ylidene]ethyl phosphate + 2 H2O + H(+). The protein operates within cofactor biosynthesis; thiamine diphosphate biosynthesis. Catalyzes the rearrangement of 1-deoxy-D-xylulose 5-phosphate (DXP) to produce the thiazole phosphate moiety of thiamine. Sulfur is provided by the thiocarboxylate moiety of the carrier protein ThiS. In vitro, sulfur can be provided by H(2)S. This is Thiazole synthase from Alteromonas mediterranea (strain DSM 17117 / CIP 110805 / LMG 28347 / Deep ecotype).